The following is a 1023-amino-acid chain: Vacuolar membrane protease (1023 aa).

The Cytoplasmic portion of the chain corresponds to 1-80 (MRAAGCGGTG…FFRSVFGYRK (80 aa)). Polar residues predominate over residues 17 to 48 (KLSRSISQHQPKSMPQASVNSEQNPSVPNSPS). The interval 17–59 (KLSRSISQHQPKSMPQASVNSEQNPSVPNSPSAHKPARSQSAQ) is disordered. Residues 81–101 (TSLTFLVALVFAATLLLSWAD) traverse the membrane as a helical segment. The Vacuolar portion of the chain corresponds to 102–425 (SSLDFSVDMP…VVFSVSQVVS (324 aa)). Residues asparagine 170 and asparagine 200 are each glycosylated (N-linked (GlcNAc...) asparagine). Histidine 214 and aspartate 226 together coordinate Zn(2+). Glutamate 259 (proton acceptor) is an active-site residue. Zn(2+) is bound by residues glutamate 260, glutamate 285, and histidine 357. The chain crosses the membrane as a helical span at residues 426-446 (ANIALLVVVPVASLLLLFIIF). Over 447-461 (RCNKGWGFNFVNAIK) the chain is Cytoplasmic. Residues 462–482 (YPLSLVASVLVLTFVSQVIIV) traverse the membrane as a helical segment. Over 483 to 491 (PSNPFLVNS) the chain is Vacuolar. N-linked (GlcNAc...) asparagine glycosylation occurs at asparagine 490. A helical membrane pass occupies residues 492-512 (SIGLLVATLFSLFLLLNYIVL). The Cytoplasmic portion of the chain corresponds to 513-529 (NGLNLVFKSFKGHQHDE). The helical transmembrane segment at 530–550 (KLIVMCESSFLTWILLLWSTV) threads the bilayer. Topologically, residues 551–564 (KLSHNKFGDDHTGE) are vacuolar. The chain crosses the membrane as a helical span at residues 565–585 (LFIPILFSLQAVACFLGFLGW). Over 586–643 (CFKPSKKVKVSREEHQPLLSSNGSNYGTQDDDDSLAPSSSLSLQSGFSENCEVHETKS) the chain is Cytoplasmic. Positions 604–613 (LSSNGSNYGT) are enriched in polar residues. The tract at residues 604-626 (LSSNGSNYGTQDDDDSLAPSSSL) is disordered. Residues 644–664 (FSYDWLVQFLVIVPISSLIIF) traverse the membrane as a helical segment. At 665–687 (NSGSLILNGLNKSIQESLSAQNL) the chain is on the vacuolar side. Asparagine 675 carries an N-linked (GlcNAc...) asparagine glycan. A helical membrane pass occupies residues 688 to 708 (IYKFIQIFVIVWSIPFLPFIF). The Cytoplasmic segment spans residues 709–712 (KLNR). Residues 713 to 733 (IIVLALSLVLLYGFFAVNITD) form a helical membrane-spanning segment. Residues 734-1023 (AFNDANPLKL…MVSVTKYIEV (290 aa)) are Vacuolar-facing. Residues asparagine 815, asparagine 858, and asparagine 892 are each glycosylated (N-linked (GlcNAc...) asparagine).

This sequence belongs to the peptidase M28 family. Zn(2+) serves as cofactor.

The protein resides in the vacuole membrane. Functionally, may be involved in vacuolar sorting and osmoregulation. This Clavispora lusitaniae (strain ATCC 42720) (Yeast) protein is Vacuolar membrane protease.